A 277-amino-acid polypeptide reads, in one-letter code: Shikimate dehydrogenase (NADP(+)) (277 aa).

Residues 15 to 17 and Thr62 each bind shikimate; that span reads SLS. Catalysis depends on Lys66, which acts as the Proton acceptor. Asn87 and Asp102 together coordinate shikimate. Residues 127 to 131, 151 to 156, and Ile219 contribute to the NADP(+) site; these read GAGGA and NRTVDK. Tyr221 contacts shikimate. Gly242 provides a ligand contact to NADP(+).

This sequence belongs to the shikimate dehydrogenase family. In terms of assembly, homodimer.

The enzyme catalyses shikimate + NADP(+) = 3-dehydroshikimate + NADPH + H(+). It participates in metabolic intermediate biosynthesis; chorismate biosynthesis; chorismate from D-erythrose 4-phosphate and phosphoenolpyruvate: step 4/7. In terms of biological role, involved in the biosynthesis of the chorismate, which leads to the biosynthesis of aromatic amino acids. Catalyzes the reversible NADPH linked reduction of 3-dehydroshikimate (DHSA) to yield shikimate (SA). The protein is Shikimate dehydrogenase (NADP(+)) of Bacillus cereus (strain ZK / E33L).